A 143-amino-acid chain; its full sequence is Small ribosomal subunit protein eS12 (143 aa).

It belongs to the eukaryotic ribosomal protein eS12 family. In terms of assembly, component of the small ribosomal subunit. Mature ribosomes consist of a small (40S) and a large (60S) subunit. The 40S subunit contains about 32 different proteins and 1 molecule of RNA (18S). The 60S subunit contains 45 different proteins and 3 molecules of RNA (25S, 5.8S and 5S).

Its subcellular location is the cytoplasm. Its function is as follows. Component of the ribosome, a large ribonucleoprotein complex responsible for the synthesis of proteins in the cell. The small ribosomal subunit (SSU) binds messenger RNAs (mRNAs) and translates the encoded message by selecting cognate aminoacyl-transfer RNA (tRNA) molecules. The large subunit (LSU) contains the ribosomal catalytic site termed the peptidyl transferase center (PTC), which catalyzes the formation of peptide bonds, thereby polymerizing the amino acids delivered by tRNAs into a polypeptide chain. The nascent polypeptides leave the ribosome through a tunnel in the LSU and interact with protein factors that function in enzymatic processing, targeting, and the membrane insertion of nascent chains at the exit of the ribosomal tunnel. In Candida albicans (strain SC5314 / ATCC MYA-2876) (Yeast), this protein is Small ribosomal subunit protein eS12 (RPS12).